Consider the following 291-residue polypeptide: Endo-1,4-beta-xylanase 11B (291 aa).

Residues 1–19 (MVAFSSLFLGASIAATALA) form the signal peptide. A GH11 domain is found at 34–222 (TYTQSATGTH…SSGSARINVG (189 aa)). The N-linked (GlcNAc...) asparagine glycan is linked to asparagine 93. Glutamate 118 serves as the catalytic Nucleophile. The active-site Proton donor is glutamate 209. A disordered region spans residues 223–246 (GGSTGGGNNGGGNNGGNPGGNPGG). The region spanning 255–291 (NCSPRWGQCGGQGWNGPTCCESGTTCRQQNQWYSQCL) is the CBM1 domain.

Belongs to the glycosyl hydrolase 11 (cellulase G) family.

The protein localises to the secreted. The catalysed reaction is Endohydrolysis of (1-&gt;4)-beta-D-xylosidic linkages in xylans.. It functions in the pathway glycan degradation; xylan degradation. With respect to regulation, the activity iss completely inhibited by Hg(2+), a metal ion that interacts with Trp and oxidizes the indole ring, and is significantly enhanced by beta-mercaptoethanol, which counteracts the oxidation effects of the S-S linkage between Cys residues. Functionally, endo-1,4-beta-xylanase involved in the hydrolysis of xylan, a major structural heterogeneous polysaccharide found in plant biomass representing the second most abundant polysaccharide in the biosphere, after cellulose. Shows maximum activity on soluble wheat arabinoxylan (defined as 100%), moderate activity on birchwood xylan (80.5%) and beechwood xylan (76.2%), and weak activity on insoluble wheat arabinoxylan (7.0%). Has no activity towards glucan or carboxymethyl cellulose-sodium (CMC-Na). This Humicola insolens (Soft-rot fungus) protein is Endo-1,4-beta-xylanase 11B.